Consider the following 215-residue polypeptide: ER lumen protein-retaining receptor B (215 aa).

Helical transmembrane passes span 6–26, 55–77, 98–118, 120–140, 149–169, and 178–198; these read LAGDMTHLASVLVLLLKIHTI, FVSLYNTSMKLVFLGSSFSIVWY, WFLVLPCFLLALLIHEKFTFL, VLWTSSLYLEAVAILPQLVLL, LTGQYIFLLGGYRGLYILNWI, and FVHWITWIAGFVQTLLYADFF.

It belongs to the ERD2 family.

Its subcellular location is the golgi apparatus membrane. It is found in the endoplasmic reticulum membrane. Determines the specificity of the luminal endoplasmic reticulum protein retention system. Required for the retro-transport of calreticulin-3 (CRT3) from the Golgi to the ER. Specifically required for elongation factor Tu receptor (EFR) function in response to the pathogen-associated molecular pattern (PAMP) elf18. The chain is ER lumen protein-retaining receptor B (ERD2B) from Arabidopsis thaliana (Mouse-ear cress).